We begin with the raw amino-acid sequence, 251 residues long: Hydroxyacylglutathione hydrolase (251 aa).

Zn(2+)-binding residues include H53, H55, D57, H58, H110, D127, and H165.

It belongs to the metallo-beta-lactamase superfamily. Glyoxalase II family. As to quaternary structure, monomer. Zn(2+) serves as cofactor.

The catalysed reaction is an S-(2-hydroxyacyl)glutathione + H2O = a 2-hydroxy carboxylate + glutathione + H(+). Its pathway is secondary metabolite metabolism; methylglyoxal degradation; (R)-lactate from methylglyoxal: step 2/2. Its function is as follows. Thiolesterase that catalyzes the hydrolysis of S-D-lactoyl-glutathione to form glutathione and D-lactic acid. The sequence is that of Hydroxyacylglutathione hydrolase from Escherichia coli O81 (strain ED1a).